The primary structure comprises 711 residues: Ribosomal RNA large subunit methyltransferase K/L (711 aa).

Residues 43–154 (LAYRITLWTR…NGVITIAMNF (112 aa)) enclose the THUMP domain.

This sequence belongs to the methyltransferase superfamily. RlmKL family.

It localises to the cytoplasm. It catalyses the reaction guanosine(2445) in 23S rRNA + S-adenosyl-L-methionine = N(2)-methylguanosine(2445) in 23S rRNA + S-adenosyl-L-homocysteine + H(+). The enzyme catalyses guanosine(2069) in 23S rRNA + S-adenosyl-L-methionine = N(2)-methylguanosine(2069) in 23S rRNA + S-adenosyl-L-homocysteine + H(+). Specifically methylates the guanine in position 2445 (m2G2445) and the guanine in position 2069 (m7G2069) of 23S rRNA. This Shewanella oneidensis (strain ATCC 700550 / JCM 31522 / CIP 106686 / LMG 19005 / NCIMB 14063 / MR-1) protein is Ribosomal RNA large subunit methyltransferase K/L.